The chain runs to 364 residues: Phosphoserine aminotransferase (364 aa).

Residue Arg-40 coordinates L-glutamate. Residues 74-75 (GT), Trp-100, Thr-149, Asp-170, and Gln-193 contribute to the pyridoxal 5'-phosphate site. Lys-194 is modified (N6-(pyridoxal phosphate)lysine). Position 235 to 236 (235 to 236 (NT)) interacts with pyridoxal 5'-phosphate.

Belongs to the class-V pyridoxal-phosphate-dependent aminotransferase family. SerC subfamily. Homodimer. Pyridoxal 5'-phosphate serves as cofactor. Expressed in ovary and head.

It catalyses the reaction O-phospho-L-serine + 2-oxoglutarate = 3-phosphooxypyruvate + L-glutamate. It carries out the reaction 4-(phosphooxy)-L-threonine + 2-oxoglutarate = (R)-3-hydroxy-2-oxo-4-phosphooxybutanoate + L-glutamate. It participates in amino-acid biosynthesis; L-serine biosynthesis; L-serine from 3-phospho-D-glycerate: step 2/3. The protein operates within cofactor biosynthesis; pyridoxine 5'-phosphate biosynthesis; pyridoxine 5'-phosphate from D-erythrose 4-phosphate: step 3/5. Functionally, catalyzes the reversible conversion of 3-phosphohydroxypyruvate to phosphoserine and of 3-hydroxy-2-oxo-4-phosphonooxybutanoate to phosphohydroxythreonine. The protein is Phosphoserine aminotransferase of Drosophila melanogaster (Fruit fly).